A 155-amino-acid polypeptide reads, in one-letter code: MADVPKREIENVEFVFEVMGSAGEGIDAVDLGDALRALNLNPTLALIEKMGGTKKRNEKKIKMDEFLPIYSQVKKEKEQGCYEDFIECLKLYDKEENGTMMLAELQHALLALGESLDDEQVETLFADCMDPEDDEGLIPYSQFIQRLMSDPVVFD.

EF-hand domains follow at residues 7–41 (REIENVEFVFEVMGSAGEGIDAVDLGDALRALNLN) and 80–115 (GCYEDFIECLKLYDKEENGTMMLAELQHALLALGES).

Myosin is a hexamer of 2 heavy chains and 4 light chains.

The polypeptide is Myosin light chain alkali (Mlc1) (Drosophila pseudoobscura pseudoobscura (Fruit fly)).